Consider the following 652-residue polypeptide: UvrABC system protein C (652 aa).

In terms of domain architecture, GIY-YIG spans 37-116 (KSSGCYLFKD…IKTNKPYFNI (80 aa)). The UVR domain maps to 226–261 (DDLEIFLQKKMLQFSNDLDYENAAKIRDQISGLKLL).

Belongs to the UvrC family. As to quaternary structure, interacts with UvrB in an incision complex.

Its subcellular location is the cytoplasm. In terms of biological role, the UvrABC repair system catalyzes the recognition and processing of DNA lesions. UvrC both incises the 5' and 3' sides of the lesion. The N-terminal half is responsible for the 3' incision and the C-terminal half is responsible for the 5' incision. The chain is UvrABC system protein C from Prochlorococcus marinus (strain MIT 9312).